A 1843-amino-acid chain; its full sequence is Protein TIC 214 (1843 aa).

A run of 6 helical transmembrane segments spans residues 18–38 (IINS…FSIG), 64–84 (FITG…HLAL), 87–107 (PHTI…WNNH), 124–144 (LSIQ…HFIL), 172–192 (VGWL…LFWI), and 217–237 (IFSI…PSPI). Disordered stretches follow at residues 244 to 281 (ETSK…AAEK), 557 to 576 (EEIE…SRKA), 582 to 647 (FTDN…DEVA), 724 to 744 (NSEE…RQEN), and 1527 to 1586 (SLEL…KKKK). Residues 251–264 (REESEEETDVEIET) show a composition bias toward acidic residues. Residues 269–281 (KGTKQEQEGAAEK) show a composition bias toward basic and acidic residues. The span at 590–639 (NTPTSTTETTSTAETTSTTETTSTTKNTSTTKNTSTTETTSTTENENTSN) shows a compositional bias: low complexity. Composition is skewed to basic and acidic residues over residues 730–744 (TKEK…RQEN) and 1527–1540 (SLEL…KKPA). Over residues 1543–1562 (NIGSDTQKQGNPGSDPSTQQ) the composition is skewed to polar residues. The segment covering 1563–1580 (KDIKKNVKEDYDGRSDIQ) has biased composition (basic and acidic residues).

It belongs to the TIC214 family. As to quaternary structure, part of the Tic complex.

The protein resides in the plastid. The protein localises to the chloroplast inner membrane. Involved in protein precursor import into chloroplasts. May be part of an intermediate translocation complex acting as a protein-conducting channel at the inner envelope. This is Protein TIC 214 from Nandina domestica (Heavenly bamboo).